The chain runs to 221 residues: Ras-related protein Rab-27A (221 aa).

Serine 2 bears the N-acetylserine mark. Residue serine 2 is modified to Phosphoserine. 16-24 (GDSGVGKTS) lines the GTP pocket. An Effector region motif is present at residues 38 to 46 (FITTVGIDF). Residues 74–78 (DTAGQ), 133–136 (NKSD), and 163–165 (SAA) contribute to the GTP site. Cysteines 123 and 188 form a disulfide. S-geranylgeranyl cysteine attachment occurs at residues cysteine 219 and cysteine 221. Cysteine 221 bears the Cysteine methyl ester mark.

Belongs to the small GTPase superfamily. Rab family. As to quaternary structure, binds SYTL1, SLAC2B, MYRIP, SYTL3, SYTL4 and SYTL5. Interacts with RPH3A and RPH3A. Binds MLPH and SYTL2. Interacts with UNC13D. Does not interact with the BLOC-3 complex (heterodimer of HPS1 and HPS4). Interacts (GDP-bound form preferentially) with DENND10.

Its subcellular location is the membrane. The protein resides in the melanosome. It localises to the late endosome. It is found in the lysosome. It carries out the reaction GTP + H2O = GDP + phosphate + H(+). Regulated by guanine nucleotide exchange factors (GEFs) which promote the exchange of bound GDP for free GTP, GTPase activating proteins (GAPs) which increase the GTP hydrolysis activity, and GDP dissociation inhibitors which inhibit the dissociation of the nucleotide from the GTPase. Activated by GEFs such as DENND10. In terms of biological role, small GTPase which cycles between active GTP-bound and inactive GDP-bound states. In its active state, binds to a variety of effector proteins to regulate homeostasis of late endocytic pathway, including endosomal positioning, maturation and secretion. Plays a role in cytotoxic granule exocytosis in lymphocytes. Required for both granule maturation and granule docking and priming at the immunologic synapse. The chain is Ras-related protein Rab-27A (RAB27A) from Canis lupus familiaris (Dog).